A 541-amino-acid chain; its full sequence is uncharacterized protein (541 aa).

The next 6 membrane-spanning stretches (helical) occupy residues 57-77, 90-110, 144-164, 167-187, 221-241, and 257-277; these read LVVT…TIAI, LTFG…SYAL, VGHL…YGLI, AFIP…ATAT, MVVW…MAMF, and VLII…ILAW. The 52-residue stretch at 278–329 folds into the HAMP domain; that stretch reads LTATPVRVVRAALRRVERGELRTNLVVFDGTELGELQRGFNAMVAGLRERER. The Guanylate cyclase domain occupies 361-485; the sequence is AVVFIDIVGS…EPVNEAARLC (125 aa).

It belongs to the adenylyl cyclase class-3 family.

It is found in the cell membrane. This is an uncharacterized protein from Mycobacterium tuberculosis (strain CDC 1551 / Oshkosh).